Reading from the N-terminus, the 246-residue chain is 1-(5-phosphoribosyl)-5-[(5-phosphoribosylamino)methylideneamino] imidazole-4-carboxamide isomerase (246 aa).

The Proton acceptor role is filled by Asp-8. Asp-130 serves as the catalytic Proton donor.

Belongs to the HisA/HisF family.

The protein resides in the cytoplasm. It catalyses the reaction 1-(5-phospho-beta-D-ribosyl)-5-[(5-phospho-beta-D-ribosylamino)methylideneamino]imidazole-4-carboxamide = 5-[(5-phospho-1-deoxy-D-ribulos-1-ylimino)methylamino]-1-(5-phospho-beta-D-ribosyl)imidazole-4-carboxamide. Its pathway is amino-acid biosynthesis; L-histidine biosynthesis; L-histidine from 5-phospho-alpha-D-ribose 1-diphosphate: step 4/9. The chain is 1-(5-phosphoribosyl)-5-[(5-phosphoribosylamino)methylideneamino] imidazole-4-carboxamide isomerase from Halorhodospira halophila (strain DSM 244 / SL1) (Ectothiorhodospira halophila (strain DSM 244 / SL1)).